The sequence spans 899 residues: ATP-dependent DNA helicase DDX31 (899 aa).

2 stretches are compositionally biased toward basic residues: residues 1–12 and 21–31; these read MNKHDQKKKRNK and KKSKGFIKNKK. Positions 1–142 are disordered; sequence MNKHDQKKKR…SKHKRNVPSK (142 aa). Residues 76 to 85 show a composition bias toward acidic residues; it reads NMNDDDDNNM. Low complexity predominate over residues 86–102; the sequence is NDDYNNNNIKGDYNNNN. Positions 106–121 are enriched in acidic residues; it reads DDVDDDDYDDDDDDNF. A Q motif motif is present at residues 173 to 201; that stretch reads FCDLKYILSESLINTLEKNEFIKMTSIQK. Residues 204–433 enclose the Helicase ATP-binding domain; that stretch reads IPLFFKPNDI…NYCLTNNTMW (230 aa). 217 to 224 is an ATP binding site; the sequence is SMTGSGKT. Residues 332–335 carry the DEAD box motif; sequence DEAD. The segment covering 463 to 472 has biased composition (polar residues); sequence NRENSPLNIH. The disordered stretch occupies residues 463-517; it reads NRENSPLNIHNNDDNDDNDDNDENNGDNNNNNDDNNNNNDDNNNKNNDDDNNNTY. Positions 476–487 are enriched in acidic residues; it reads DNDDNDDNDENN. The segment covering 488–503 has biased composition (low complexity); that stretch reads GDNNNNNDDNNNNNDD. In terms of domain architecture, Helicase C-terminal spans 593 to 782; sequence KITPVLERED…TIINHFKKFC (190 aa).

The protein belongs to the DEAD box helicase family. DDX31/DBP7 subfamily.

The protein resides in the nucleus. The protein localises to the nucleolus. The enzyme catalyses ATP + H2O = ADP + phosphate + H(+). Has DNA helicase activity and may also have RNA helicase activity; the DNA helicase direction was not determined. Shows ssDNA and RNA dependent ATPase activity. This Plasmodium falciparum (isolate 3D7) protein is ATP-dependent DNA helicase DDX31 (DDX31).